The primary structure comprises 396 residues: S-adenosylmethionine synthase (396 aa).

Histidine 16 is an ATP binding site. Aspartate 18 is a Mg(2+) binding site. K(+) is bound at residue glutamate 44. 2 residues coordinate L-methionine: glutamate 57 and glutamine 100. Positions 100 to 110 are flexible loop; the sequence is QSQDIARGVDN. ATP contacts are provided by residues 162 to 164, 228 to 229, aspartate 237, 243 to 244, alanine 260, and lysine 264; these read DGK, RF, and RK. Aspartate 237 contacts L-methionine. Lysine 268 is a binding site for L-methionine.

Belongs to the AdoMet synthase family. As to quaternary structure, homotetramer; dimer of dimers. It depends on Mg(2+) as a cofactor. K(+) serves as cofactor.

The protein localises to the cytoplasm. The catalysed reaction is L-methionine + ATP + H2O = S-adenosyl-L-methionine + phosphate + diphosphate. It functions in the pathway amino-acid biosynthesis; S-adenosyl-L-methionine biosynthesis; S-adenosyl-L-methionine from L-methionine: step 1/1. Catalyzes the formation of S-adenosylmethionine (AdoMet) from methionine and ATP. The overall synthetic reaction is composed of two sequential steps, AdoMet formation and the subsequent tripolyphosphate hydrolysis which occurs prior to release of AdoMet from the enzyme. This Myxococcus xanthus (strain DK1622) protein is S-adenosylmethionine synthase.